Consider the following 189-residue polypeptide: uncharacterized protein (189 aa).

The next 4 helical transmembrane spans lie at 49 to 69, 78 to 98, 102 to 122, and 124 to 144; these read LLGILKLITFPVLCAAGLFVF, LFHKSFQGCSGYVLATFLSLF, LTIVGIVSCITWAPGFIFPMI, and VSIAFATVETCFQIYTHLFPA. The interval 165-189 is disordered; it reads SSSAPDLNYPSLPTQSASPSQRFSA.

Belongs to the chlamydial CPn_0442/CT_006/TC_0274 family.

The protein resides in the cell membrane. This is an uncharacterized protein from Chlamydia trachomatis serovar D (strain ATCC VR-885 / DSM 19411 / UW-3/Cx).